The chain runs to 232 residues: Ribonuclease 3 (232 aa).

Residues 5–134 (ENLLFDRFGL…FLGALLLDKG (130 aa)) enclose the RNase III domain. Glu-47 lines the Mg(2+) pocket. Residue Asp-51 is part of the active site. The Mg(2+) site is built by Asp-120 and Glu-123. Glu-123 is an active-site residue. Residues 160-229 (DYKTKLQELL…AKNAFEKENH (70 aa)) form the DRBM domain.

The protein belongs to the ribonuclease III family. As to quaternary structure, homodimer. The cofactor is Mg(2+).

Its subcellular location is the cytoplasm. The catalysed reaction is Endonucleolytic cleavage to 5'-phosphomonoester.. Its function is as follows. Digests double-stranded RNA. Involved in the processing of primary rRNA transcript to yield the immediate precursors to the large and small rRNAs (23S and 16S). Processes some mRNAs, and tRNAs when they are encoded in the rRNA operon. Processes pre-crRNA and tracrRNA of type II CRISPR loci if present in the organism. This is Ribonuclease 3 from Streptococcus gordonii (strain Challis / ATCC 35105 / BCRC 15272 / CH1 / DL1 / V288).